Consider the following 355-residue polypeptide: Blue-sensitive opsin (355 aa).

Over 1–41 (MKSRPQEFQEDFYIPIPLDTNNITALSPFLVPQDHLGGSGI) the chain is Extracellular. N22 is a glycosylation site (N-linked (GlcNAc...) asparagine). The helical transmembrane segment at 42 to 66 (FMIMTVFMLFLFIGGTSINVLTIVC) threads the bilayer. At 67-78 (TVQYKKLRSHLN) the chain is on the cytoplasmic side. Residues 79-104 (YILVNLAISNLLVSTVGSFTAFVSFL) traverse the membrane as a helical segment. Residues 105-118 (NRYFIFGPTACKIE) are Extracellular-facing. A disulfide bond links C115 and C192. The chain crosses the membrane as a helical span at residues 119–138 (GFVATLGGMVSLWSLSVVAF). Topologically, residues 139–157 (ERWLVICKPVGNFSFKGTH) are cytoplasmic. Residues 158 to 181 (AIIGCALTWFFALLASTPPLFGWS) traverse the membrane as a helical segment. Topologically, residues 182–207 (RYIPEGLQCSCGPDWYTTENKYNNES) are extracellular. Residue N205 is glycosylated (N-linked (GlcNAc...) asparagine). Residues 208 to 235 (YVMFLFCFCFGFPFTVILFCYGQLLFTL) form a helical membrane-spanning segment. The Cytoplasmic segment spans residues 236–257 (KSAAKAQADSASTQKAEREVTK). A helical transmembrane segment spans residues 258-281 (MVVVMVMGFLVCWLPYASFALWVV). The Extracellular portion of the chain corresponds to 282 to 289 (FNRGQSFD). The chain crosses the membrane as a helical span at residues 290–314 (LRLGTIPSCFSKASTVYNPVIYVFM). K301 bears the N6-(retinylidene)lysine mark. At 315–355 (NKQFRSCMMKLIFCGKSPFGDDEEASSSSQVTQVSSVGPEK) the chain is on the cytoplasmic side. Residues 334-355 (GDDEEASSSSQVTQVSSVGPEK) are disordered. A compositionally biased stretch (low complexity) spans 340-355 (SSSSQVTQVSSVGPEK).

This sequence belongs to the G-protein coupled receptor 1 family. Opsin subfamily. In terms of processing, phosphorylated on some or all of the serine and threonine residues present in the C-terminal region. The color pigments are found in the cone photoreceptor cells.

The protein localises to the membrane. Its function is as follows. Visual pigments are the light-absorbing molecules that mediate vision. They consist of an apoprotein, opsin, covalently linked to cis-retinal. The polypeptide is Blue-sensitive opsin (B23) (Psalidodon fasciatus (Banded astyanax)).